The sequence spans 853 residues: DNA mismatch repair protein MutS (853 aa).

Position 614–621 (614–621 (GPNMGGKS)) interacts with ATP.

This sequence belongs to the DNA mismatch repair MutS family.

In terms of biological role, this protein is involved in the repair of mismatches in DNA. It is possible that it carries out the mismatch recognition step. This protein has a weak ATPase activity. The polypeptide is DNA mismatch repair protein MutS (Escherichia coli (strain SE11)).